The following is a 136-amino-acid chain: MNPIDPQVAPWEHPGAAPETPCTNCYCKKCCFHCPVCFTKKALGISYGRKRRGRKSAVHSTNNQDPVRQQSLPKRSRIQNSQEESQEEVEAETTSGGRPRQQDSSVSSGRTSGTSSSGYTRPFKTSSGSSGSACKH.

Residues 22-37 (CTNCYCKKCCFHCPVC) form a cysteine-rich region. The segment at 38–48 (FTKKALGISYG) is core. Positions 48–57 (GRKRRGRKSA) are enriched in basic residues. The disordered stretch occupies residues 48 to 136 (GRKRRGRKSA…SGSSGSACKH (89 aa)). The short motif at 49–55 (RKRRGRK) is the Nuclear localization signal, and RNA-binding (TAR) element. The segment covering 58-73 (VHSTNNQDPVRQQSLP) has biased composition (polar residues). Residues 104–120 (SSVSSGRTSGTSSSGYT) show a composition bias toward low complexity. Polar residues predominate over residues 123-136 (FKTSSGSSGSACKH).

This sequence belongs to the lentiviruses Tat family. Interacts with host CCNT1. Associates with the P-TEFb complex composed at least of Tat, P-TEFb (CDK9 and CCNT1), TAR RNA, RNA Pol II. Interacts with CCNT2; the resulting complex is unable to bind to TAR RNA.

Its subcellular location is the host nucleus. It localises to the host nucleolus. In terms of biological role, transcriptional activator that increases RNA Pol II processivity, thereby increasing the level of full-length viral transcripts. Recognizes a hairpin structure at the 5'-LTR of the nascent viral mRNAs referred to as the transactivation responsive RNA element (TAR) and recruits the cyclin T1-CDK9 complex (P-TEFb complex) that will in turn hyperphosphorylate the RNA polymerase II to allow efficient elongation. The CDK9 component of P-TEFb and other Tat-activated kinases hyperphosphorylate the C-terminus of RNA Pol II that becomes stabilized and much more processive. Functionally, extracellular circulating Tat can be endocytosed by surrounding uninfected cells via the binding to several surface receptors. Endosomal low pH allows Tat to cross the endosome membrane to enter the cytosol and eventually further translocate into the nucleus, thereby inducing severe cell dysfunctions ranging from cell activation to cell death. Through. This Simian immunodeficiency virus (isolate TAN1) (SIV-cpz) protein is Protein Tat.